A 493-amino-acid chain; its full sequence is Protein kinase PINOID 2 (493 aa).

A disordered region spans residues M1–K53. The span at I27–D44 shows a compositional bias: low complexity. The Protein kinase domain occupies F80 to F443. Residues L86 to V94 and K120 contribute to the ATP site. D216 (proton acceptor) is an active-site residue. Over residues G295–G306 the composition is skewed to gly residues. 2 disordered regions span residues G295–P320 and E458–F493. Acidic residues predominate over residues D307 to E319. The region spanning K444–F493 is the AGC-kinase C-terminal domain. The span at S474–F493 shows a compositional bias: basic and acidic residues.

It belongs to the protein kinase superfamily. Ser/Thr protein kinase family.

It carries out the reaction L-seryl-[protein] + ATP = O-phospho-L-seryl-[protein] + ADP + H(+). The enzyme catalyses L-threonyl-[protein] + ATP = O-phospho-L-threonyl-[protein] + ADP + H(+). Its function is as follows. Serine/threonine-protein kinase involved in the regulation of auxin signaling. The protein is Protein kinase PINOID 2 (PID2) of Oryza sativa subsp. japonica (Rice).